Here is a 348-residue protein sequence, read N- to C-terminus: Rhodopsin (348 aa).

An N-acetylmethionine modification is found at Met1. At 1 to 36 (MNGTEGPNFYVPFSNKTGVVRSPFEYPQYYLAEPWQ) the chain is on the extracellular side. N-linked (GlcNAc...) asparagine glycosylation is found at Asn2 and Asn15. The chain crosses the membrane as a helical span at residues 37–61 (FSMLAAYMFLLIVLGFPINFLTLYV). Residues 62-73 (TVQHKNVRTPLN) lie on the Cytoplasmic side of the membrane. Residues 74 to 96 (YILLNLAVANHFMVFGGFTTTLY) traverse the membrane as a helical segment. At 97 to 110 (TSLHGYFVFGSTGC) the chain is on the extracellular side. Residues Cys110 and Cys187 are joined by a disulfide bond. The chain crosses the membrane as a helical span at residues 111–133 (NLEGFFATLGGEIALWSLVVLAI). A 'Ionic lock' involved in activated form stabilization motif is present at residues 134-136 (ERY). The Cytoplasmic segment spans residues 134 to 152 (ERYVVVCKPMSNFRFGENH). A helical transmembrane segment spans residues 153–173 (AIMGVAFTWVMALACAAPPLV). Over 174–202 (GWSRYIPEGMQCSCGIDYYTLKPEVNNES) the chain is Extracellular. Residue Glu201 coordinates Zn(2+). A helical transmembrane segment spans residues 203–224 (FVIYMFVVHFTIPMTIIFFCYG). The Cytoplasmic portion of the chain corresponds to 225–252 (QLVFTVKEAAAQQQESATTQKAEKEVTR). Residues 253 to 274 (MVIIMVIAFLICWVPYASVAFY) traverse the membrane as a helical segment. Over 275–286 (IFTHQGSDFGPI) the chain is Extracellular. Gln279 contributes to the Zn(2+) binding site. A helical membrane pass occupies residues 287–308 (LMTLPAFFAKSSAIYNPVIYIM). N6-(retinylidene)lysine is present on Lys296. Residues 309-348 (MNKQFRNCMLTTICCGKNPFGEEEGSTTASKTETSQVAPA) are Cytoplasmic-facing. S-palmitoyl cysteine attachment occurs at residues Cys322 and Cys323. Positions 330–348 (EEEGSTTASKTETSQVAPA) are interaction with SAG. Residue Ser334 is modified to Phosphoserine. Phosphothreonine is present on residues Thr335 and Thr336. A Phosphoserine modification is found at Ser338. Phosphothreonine occurs at positions 340 and 342. The residue at position 343 (Ser343) is a Phosphoserine.

The protein belongs to the G-protein coupled receptor 1 family. Opsin subfamily. In terms of assembly, homodimer. May form a complex composed of RHO, GRK1 and RCVRN in a Ca(2+)-dependent manner; RCVRN prevents the interaction between GRK1 and RHO. Interacts with GRK1. Interacts (phosphorylated form) with SAG. Interacts with GNAT1. Interacts with GNAT3. SAG and G-proteins compete for a common binding site. Interacts with PRCD; the interaction promotes PRCD stability. Forms a complex with ASAP1 and ARF4. Forms a complex with ASAP1, RAB11A, Rabin8/RAB3IP, ARF4 and RAB11FIP3; the complex regulates Golgi-to-cilia rhodopsin/RHO transport in photoreceptors. Phosphorylated on some or all of the serine and threonine residues present in the C-terminal region. In terms of processing, contains one covalently linked retinal chromophore. Upon light absorption, the covalently bound 11-cis-retinal is converted to all-trans-retinal. After hydrolysis of the Schiff base and release of the covalently bound all-trans-retinal, active rhodopsin is regenerated by binding of a fresh molecule of 11-cis-retinal.

The protein resides in the membrane. The protein localises to the cell projection. It is found in the cilium. Its subcellular location is the photoreceptor outer segment. Its function is as follows. Photoreceptor required for image-forming vision at low light intensity. Required for photoreceptor cell viability after birth. Light-induced isomerization of 11-cis to all-trans retinal triggers a conformational change that activates signaling via G-proteins. Subsequent receptor phosphorylation mediates displacement of the bound G-protein alpha subunit by the arrestin SAG and terminates signaling. The protein is Rhodopsin (RHO) of Loxodonta africana (African elephant).